A 439-amino-acid polypeptide reads, in one-letter code: Phthalate 4,5-dioxygenase oxygenase subunit (439 aa).

Residues 27–134 (WTPVCLLEEV…TREWGGFVWA (108 aa)) form the Rieske domain. 4 residues coordinate [2Fe-2S] cluster: Cys70, His72, Cys89, and His92. Residues His181 and His186 each coordinate Fe cation.

This sequence belongs to the bacterial ring-hydroxylating dioxygenase alpha subunit family. In terms of assembly, this dioxygenase system consists of two proteins: phthalate oxygenase and phthalate oxygenase reductase. It depends on [2Fe-2S] cluster as a cofactor. Requires Fe cation as cofactor.

It catalyses the reaction phthalate + NADH + O2 + H(+) = cis-4,5-dihydroxycyclohexa-2,6-diene-1,2-dicarboxylate + NAD(+). It participates in xenobiotic degradation; phthalate degradation; 3,4-dihydroxybenzoate from phthalate: step 1/3. This Pseudomonas putida (Arthrobacter siderocapsulatus) protein is Phthalate 4,5-dioxygenase oxygenase subunit (pht3).